We begin with the raw amino-acid sequence, 446 residues long: Phosphoglucosamine mutase (446 aa).

The Phosphoserine intermediate role is filled by S102. Mg(2+) contacts are provided by S102, D239, D241, and D243. S102 is subject to Phosphoserine.

Belongs to the phosphohexose mutase family. The cofactor is Mg(2+). Activated by phosphorylation.

The enzyme catalyses alpha-D-glucosamine 1-phosphate = D-glucosamine 6-phosphate. Catalyzes the conversion of glucosamine-6-phosphate to glucosamine-1-phosphate. The polypeptide is Phosphoglucosamine mutase (Solibacter usitatus (strain Ellin6076)).